We begin with the raw amino-acid sequence, 67 residues long: Protein C' (67 aa).

It belongs to the rhabdoviruses C protein family.

In terms of biological role, seems to stimulates transcription by the viral polymerase. May play a role in viral pathogenesis or transmission by insects vectors. This Vesicular stomatitis Indiana virus (strain 98COE North America) (VSIV) protein is Protein C' (P).